Here is a 791-residue protein sequence, read N- to C-terminus: Nuclear cap-binding protein subunit 1-A (791 aa).

A disordered region spans residues 1-24 (MSRRRHSDENDGGQAHKRRKTSEP). Residues 28-240 (EDRLESLICR…CLWAQIQKLK (213 aa)) form the MIF4G domain. Residues 641–714 (LHSTIRKMNK…SEQKNLFLVI (74 aa)) adopt a coiled-coil conformation. Residues 664-687 (QRLAKQHKHRDSDDNDEDSGRKDG) are disordered.

The protein belongs to the NCBP1 family. In terms of assembly, component of the nuclear cap-binding complex (CBC), a heterodimer composed of ncbp1/cbp80 and ncbp2/cbp20 that interacts with m7GpppG-capped RNA. Component of an alternative nuclear cap-binding complex (CBC) composed of ncbp1/cbp80 and ncbp3.

Its subcellular location is the nucleus. It is found in the cytoplasm. Functionally, component of the cap-binding complex (CBC), which binds cotranscriptionally to the 5'-cap of pre-mRNAs and is involved in various processes such as pre-mRNA splicing, translation regulation, nonsense-mediated mRNA decay, RNA-mediated gene silencing (RNAi) by microRNAs (miRNAs) and mRNA export. The CBC complex is involved in mRNA export from the nucleus, leading to the recruitment of the mRNA export machinery to the 5'-end of mRNA and to mRNA export in a 5' to 3' direction through the nuclear pore. The CBC complex is also involved in mediating U snRNA and intronless mRNAs export from the nucleus. The CBC complex is essential for a pioneer round of mRNA translation, before steady state translation when the CBC complex is replaced by cytoplasmic cap-binding protein eIF4E. The pioneer round of mRNA translation mediated by the CBC complex plays a central role in nonsense-mediated mRNA decay (NMD), NMD only taking place in mRNAs bound to the CBC complex, but not on eIF4E-bound mRNAs. The CBC complex enhances NMD in mRNAs containing at least one exon-junction complex (EJC), promoting the interaction between UPF1 and UPF2. The CBC complex is also involved in 'failsafe' NMD, which is independent of the EJC complex, while it does not participate in Staufen-mediated mRNA decay (SMD). During cell proliferation, the CBC complex is also involved in microRNAs (miRNAs) biogenesis via its interaction with SRRT/ARS2 and is required for miRNA-mediated RNA interference. The CBC complex also acts as a negative regulator of parn, thereby acting as an inhibitor of mRNA deadenylation. In the CBC complex, NCBP1/CBP80 does not bind directly capped RNAs (m7GpppG-capped RNA) but is required to stabilize the movement of the N-terminal loop of NCBP2/CBP20 and lock the CBC into a high affinity cap-binding state with the cap structure. Associates with NCBP3 to form an alternative cap-binding complex (CBC) which plays a key role in mRNA export. The conventional CBC with NCBP2 binds both small nuclear RNA (snRNA) and messenger (mRNA) and is involved in their export from the nucleus whereas the alternative CBC with NCBP3 does not bind snRNA and associates only with mRNA thereby playing a role only in mRNA export. In Xenopus laevis (African clawed frog), this protein is Nuclear cap-binding protein subunit 1-A (ncbp1-a).